The sequence spans 511 residues: ATP synthase subunit alpha 1 (511 aa).

Residue 174–181 (GDRQTGKT) participates in ATP binding.

It belongs to the ATPase alpha/beta chains family. F-type ATPases have 2 components, CF(1) - the catalytic core - and CF(0) - the membrane proton channel. CF(1) has five subunits: alpha(3), beta(3), gamma(1), delta(1), epsilon(1). CF(0) has four main subunits: a(1), b(1), b'(1) and c(9-12).

The protein resides in the cell inner membrane. It carries out the reaction ATP + H2O + 4 H(+)(in) = ADP + phosphate + 5 H(+)(out). Its function is as follows. Produces ATP from ADP in the presence of a proton gradient across the membrane. The alpha chain is a regulatory subunit. This chain is ATP synthase subunit alpha 1, found in Chlorobium luteolum (strain DSM 273 / BCRC 81028 / 2530) (Pelodictyon luteolum).